The chain runs to 340 residues: MKHTAEFLDTHQTQISSILSGGYNHPLLREWQNERQLAKNMFIFPLFVSDMPDEDQPIESLPNIRRFGVNKLAGYLKPLVAKGLRAVLLFGVPMKPNSKDEFGSAADDPEGPVIQAIKLLRAEFPELYILCDVCLCEYTSHGHCGVLYDDGSINREQSVRRLAAVAVNYAKAGAHSVAPSDMIDGRIRDIKLGLLAAGLAHKTFVMSYAAKFSGNLYGPFRDAACSAPSQGDRKCYQLPSGGRGLARRALRRDLDEGADGIIVKPSTFYLDIMADASEIAKDVPICAYHVSGEYAMLHAAAKAGVVDFKSIAFESHQGFLRAGARLIISYMTPEFLDWLS.

Zn(2+) is bound by residues cysteine 134, cysteine 136, and cysteine 144. Residue lysine 211 is the Schiff-base intermediate with substrate of the active site. Residues arginine 221 and arginine 233 each contribute to the 5-aminolevulinate site. Lysine 264 serves as the catalytic Schiff-base intermediate with substrate. 5-aminolevulinate contacts are provided by serine 291 and tyrosine 330.

It belongs to the ALAD family. In terms of assembly, homooctamer. Zn(2+) serves as cofactor.

It catalyses the reaction 2 5-aminolevulinate = porphobilinogen + 2 H2O + H(+). The protein operates within porphyrin-containing compound metabolism; protoporphyrin-IX biosynthesis; coproporphyrinogen-III from 5-aminolevulinate: step 1/4. Catalyzes an early step in the biosynthesis of tetrapyrroles. Binds two molecules of 5-aminolevulinate per subunit, each at a distinct site, and catalyzes their condensation to form porphobilinogen. The chain is Delta-aminolevulinic acid dehydratase (HEM2) from Eremothecium gossypii (strain ATCC 10895 / CBS 109.51 / FGSC 9923 / NRRL Y-1056) (Yeast).